A 195-amino-acid chain; its full sequence is Porimin (195 aa).

The signal sequence occupies residues 1–23 (MALCARAALLLGVLQVLALLGAA). Topologically, residues 24-152 (QDPTDAQGSA…PTKGKGSKFD (129 aa)) are extracellular. N-linked (GlcNAc...) asparagine glycosylation is found at Asn-36, Asn-45, Asn-51, Asn-59, Asn-109, and Asn-115. The segment at 99 to 127 (VTPTASKSTPNASASPNSTHTSASMTTPA) is disordered. Positions 101 to 126 (PTASKSTPNASASPNSTHTSASMTTP) are enriched in polar residues. A helical membrane pass occupies residues 153–173 (AGSFVGGIVLTLGVLSILYIG). The Cytoplasmic portion of the chain corresponds to 174-195 (CKMYYSRRGIRYRSIDEHDAII). Position 187 is a phosphoserine (Ser-187).

It belongs to the CD164 family.

Its subcellular location is the membrane. In terms of biological role, implicated in oncotic cell death, characterized by cell swelling, organelle swelling, vacuolization and increased membrane permeability. The polypeptide is Porimin (Tmem123) (Mus musculus (Mouse)).